The following is a 448-amino-acid chain: Phosphoglucosamine mutase (448 aa).

The Phosphoserine intermediate role is filled by Ser-100. Ser-100, Asp-240, Asp-242, and Asp-244 together coordinate Mg(2+). A Phosphoserine modification is found at Ser-100.

It belongs to the phosphohexose mutase family. Requires Mg(2+) as cofactor. Activated by phosphorylation.

It carries out the reaction alpha-D-glucosamine 1-phosphate = D-glucosamine 6-phosphate. Its function is as follows. Catalyzes the conversion of glucosamine-6-phosphate to glucosamine-1-phosphate. The sequence is that of Phosphoglucosamine mutase from Bacillus cereus (strain ATCC 10987 / NRS 248).